The following is a 782-amino-acid chain: MRQKTLDVLEFEKIKSFVADETISDLGREKVQEMAPASNFDTVEFQMNETDEISQIYNKHRLPSLSGLAKVSPLVHRASIGGVLNVAELNRIKRLVQVQNQFKTFYNQMLEEDEEVKYPILHDKMNHLPILTDLFKEINETCDAHDLFDHASYTLQSIRSKISRTNQRIRQNLDRIVKNQGNQKKLSDAIVTVRNDRNVIPVKAEYRQDFNGIVHDQSASGQTLYIEPNSVVEMNNQISRLRNDEAVERERILTELTGFVSAEADALLIAESVMGQIDFLIAKARYARTIKGTKPTFKEDRTIYLPNAFHPLLDKDTVVANTIEFIDDVETVIITGPNTGGKTVTLKTLGLIIVMAQSGLLIPTLDGSQLSIFENVYCDIGDEQSIEQSLSTFSSHMKNIVEILQDADQNSLILFDELGAGTDPSEGAALAMSILDYVRRLGSLVMATTHYPELKAYSYNREGVMNASVEFDVETLSPTYKLLMGVPGRSNAFDISKKLGLSLNIINKAKTMIGTDEQEINAMIESLEQNSKRVDQQRIELDRLVREAQQTHDALSKQYQQYQNYETSLMDEAKEKANQRVKSATKEADEILKELRNLRDHKGAEVKEHELIDKKKQLDDQYEVKSIKQHVQKKKYDTIHTGDEVKVLSYGQKGEVLELVGDEEAVVQMGIIKMKLPIEDLEKTKKKKEKPTKMVTRQNRQTIKTELDLRGYRYEEALNELDQYLDQAVLSNYEQVYIIHGKGTGALQKGVQQHLKKHKSVRQFRGGMPSEGGFGVTVAELK.

An ATP-binding site is contributed by 336–343; that stretch reads GPNTGGKT. The Smr domain maps to 707 to 782; it reads LDLRGYRYEE…GFGVTVAELK (76 aa).

Belongs to the DNA mismatch repair MutS family. MutS2 subfamily. In terms of assembly, homodimer. Binds to stalled ribosomes, contacting rRNA.

Functionally, endonuclease that is involved in the suppression of homologous recombination and thus may have a key role in the control of bacterial genetic diversity. In terms of biological role, acts as a ribosome collision sensor, splitting the ribosome into its 2 subunits. Detects stalled/collided 70S ribosomes which it binds and splits by an ATP-hydrolysis driven conformational change. Acts upstream of the ribosome quality control system (RQC), a ribosome-associated complex that mediates the extraction of incompletely synthesized nascent chains from stalled ribosomes and their subsequent degradation. Probably generates substrates for RQC. This is Endonuclease MutS2 from Staphylococcus epidermidis (strain ATCC 35984 / DSM 28319 / BCRC 17069 / CCUG 31568 / BM 3577 / RP62A).